Consider the following 468-residue polypeptide: Probable serine/threonine-protein phosphatase 2A activator 2 (468 aa).

The span at 412 to 424 (STTTNNNNNNITS) shows a compositional bias: low complexity. The tract at residues 412 to 468 (STTTNNNNNNITSGDHCNDNEQQCSETHNHDHNHNHNHNHNHPPPPPQQQRSYFPLD) is disordered.

The protein belongs to the PTPA-type PPIase family.

Its subcellular location is the cytoplasm. It carries out the reaction [protein]-peptidylproline (omega=180) = [protein]-peptidylproline (omega=0). Functionally, PPIases accelerate the folding of proteins. It catalyzes the cis-trans isomerization of proline imidic peptide bonds in oligopeptides. Acts as a regulatory subunit for PP2A-like phosphatases modulating their activity or substrate specificity, probably by inducing a conformational change in the catalytic subunit, a direct target of the PPIase. This is Probable serine/threonine-protein phosphatase 2A activator 2 (ppp2r4B) from Dictyostelium discoideum (Social amoeba).